We begin with the raw amino-acid sequence, 383 residues long: tRNA (adenine(58)-N(1))-methyltransferase catalytic subunit TRM61 (383 aa).

Residues Val94, 121–124, Glu139, Arg144, 168–169, and Asp203 each bind S-adenosyl-L-methionine; these read SGSF and DV. Phosphoserine is present on Ser302.

Belongs to the class I-like SAM-binding methyltransferase superfamily. TRM61 family. In terms of assembly, heterotetramer; composed of two copies of TRM6/GCD10 and two copies of TRM61/GCD14.

Its subcellular location is the nucleus. It carries out the reaction adenosine(58) in tRNA + S-adenosyl-L-methionine = N(1)-methyladenosine(58) in tRNA + S-adenosyl-L-homocysteine + H(+). In terms of biological role, catalytic subunit of tRNA (adenine-N(1)-)-methyltransferase, which catalyzes the formation of N(1)-methyladenine at position 58 (m1A58) in initiator methionyl-tRNA. GCD14 is also required for repression of GCN4 mRNA translation by the upstream open reading frames (uORFs) under conditions of amino acid sufficiency. This Saccharomyces cerevisiae (strain ATCC 204508 / S288c) (Baker's yeast) protein is tRNA (adenine(58)-N(1))-methyltransferase catalytic subunit TRM61 (GCD14).